Here is a 187-residue protein sequence, read N- to C-terminus: MVKYSREPSNLTRSAKAYGAYLRVHFKNTYETATAIKGMLVKDAKRYLNDVIERKRCVPFRKFRGGVGRCAQAKAFKHTQGRWPEKSCKFLLDLLKNLESNAEVKGLEQSKLRLEHVQVNRAPVGRRRSYRAHGRIIPFLSHPCHVELIAVEDEDHVPRHTSTEKRVVKLNKRELARMRLRTGKSLS.

It belongs to the universal ribosomal protein uL22 family.

The sequence is that of Large ribosomal subunit protein uL22 (RPL17) from Theileria parva (East coast fever infection agent).